The sequence spans 174 residues: uncharacterized protein (174 aa).

Residues Met1–Tyr55 form a disordered region. Gly2 carries N-myristoyl glycine lipidation. Positions Lys7–Gln19 are enriched in basic and acidic residues. A compositionally biased stretch (low complexity) spans Arg20–Gln38.

This is an uncharacterized protein from Dictyostelium discoideum (Social amoeba).